The chain runs to 159 residues: 3-hydroxyacyl-[acyl-carrier-protein] dehydratase FabZ (159 aa).

The active site involves histidine 58.

The protein belongs to the thioester dehydratase family. FabZ subfamily.

It is found in the cytoplasm. The enzyme catalyses a (3R)-hydroxyacyl-[ACP] = a (2E)-enoyl-[ACP] + H2O. Functionally, involved in unsaturated fatty acids biosynthesis. Catalyzes the dehydration of short chain beta-hydroxyacyl-ACPs and long chain saturated and unsaturated beta-hydroxyacyl-ACPs. This is 3-hydroxyacyl-[acyl-carrier-protein] dehydratase FabZ from Helicobacter pylori (strain HPAG1).